The primary structure comprises 295 residues: Bifunctional protein FolD (295 aa).

NADP(+) is bound by residues G165–G167, S192, and I233.

It belongs to the tetrahydrofolate dehydrogenase/cyclohydrolase family. In terms of assembly, homodimer.

The catalysed reaction is (6R)-5,10-methylene-5,6,7,8-tetrahydrofolate + NADP(+) = (6R)-5,10-methenyltetrahydrofolate + NADPH. The enzyme catalyses (6R)-5,10-methenyltetrahydrofolate + H2O = (6R)-10-formyltetrahydrofolate + H(+). It participates in one-carbon metabolism; tetrahydrofolate interconversion. Its function is as follows. Catalyzes the oxidation of 5,10-methylenetetrahydrofolate to 5,10-methenyltetrahydrofolate and then the hydrolysis of 5,10-methenyltetrahydrofolate to 10-formyltetrahydrofolate. This chain is Bifunctional protein FolD, found in Tropheryma whipplei (strain TW08/27) (Whipple's bacillus).